Here is a 385-residue protein sequence, read N- to C-terminus: Glucose-fructose oxidoreductase domain-containing protein 2 (385 aa).

The signal sequence occupies residues 1–25; that stretch reads MKLLPGVGVFGTGSSARVLVPLLRA.

This sequence belongs to the Gfo/Idh/MocA family.

It is found in the secreted. Its subcellular location is the extracellular space. The protein localises to the extracellular matrix. Its function is as follows. Promotes matrix assembly. The polypeptide is Glucose-fructose oxidoreductase domain-containing protein 2 (Gfod2) (Mus musculus (Mouse)).